The sequence spans 215 residues: Probable nicotinate-nucleotide adenylyltransferase (215 aa).

Belongs to the NadD family.

The catalysed reaction is nicotinate beta-D-ribonucleotide + ATP + H(+) = deamido-NAD(+) + diphosphate. The protein operates within cofactor biosynthesis; NAD(+) biosynthesis; deamido-NAD(+) from nicotinate D-ribonucleotide: step 1/1. Its function is as follows. Catalyzes the reversible adenylation of nicotinate mononucleotide (NaMN) to nicotinic acid adenine dinucleotide (NaAD). This is Probable nicotinate-nucleotide adenylyltransferase from Coxiella burnetii (strain RSA 331 / Henzerling II).